We begin with the raw amino-acid sequence, 216 residues long: Glycerol-3-phosphate acyltransferase (216 aa).

A run of 5 helical transmembrane segments spans residues 4–24 (IALGMIIFAYLCGSISSAILV), 56–76 (VAVLLFDILKGMLPVWIAYLL), 80–100 (PLYLGLTAIAACLGHIYPVFF), 112–132 (FGAIAPIGWDLTGLMTGTWLL), and 138–158 (GYSSLGAIVSALIAPFYVWWF).

Belongs to the PlsY family. In terms of assembly, probably interacts with PlsX.

The protein resides in the cell inner membrane. It catalyses the reaction an acyl phosphate + sn-glycerol 3-phosphate = a 1-acyl-sn-glycero-3-phosphate + phosphate. The protein operates within lipid metabolism; phospholipid metabolism. In terms of biological role, catalyzes the transfer of an acyl group from acyl-phosphate (acyl-PO(4)) to glycerol-3-phosphate (G3P) to form lysophosphatidic acid (LPA). This enzyme utilizes acyl-phosphate as fatty acyl donor, but not acyl-CoA or acyl-ACP. This chain is Glycerol-3-phosphate acyltransferase, found in Yersinia pseudotuberculosis serotype O:1b (strain IP 31758).